A 349-amino-acid polypeptide reads, in one-letter code: Hydroxymethylglutaryl-CoA synthase (349 aa).

(3S)-3-hydroxy-3-methylglutaryl-CoA is bound by residues Asp-29 and Ala-30. The active-site Proton donor/acceptor is Glu-81. (3S)-3-hydroxy-3-methylglutaryl-CoA is bound by residues Cys-113, Thr-154, Thr-202, and His-235. Catalysis depends on Cys-113, which acts as the Acyl-thioester intermediate. The active-site Proton donor/acceptor is His-235. Arg-240 provides a ligand contact to CoA. (3S)-3-hydroxy-3-methylglutaryl-CoA contacts are provided by Arg-244, Asn-267, and Ser-297.

It belongs to the thiolase-like superfamily. Archaeal HMG-CoA synthase family. In terms of assembly, interacts with acetoacetyl-CoA thiolase that catalyzes the precedent step in the pathway and with a DUF35 protein. The acetoacetyl-CoA thiolase/HMG-CoA synthase complex channels the intermediate via a fused CoA-binding site, which allows for efficient coupling of the endergonic thiolase reaction with the exergonic HMGCS reaction.

The enzyme catalyses acetoacetyl-CoA + acetyl-CoA + H2O = (3S)-3-hydroxy-3-methylglutaryl-CoA + CoA + H(+). Its pathway is metabolic intermediate biosynthesis; (R)-mevalonate biosynthesis; (R)-mevalonate from acetyl-CoA: step 2/3. Catalyzes the condensation of acetyl-CoA with acetoacetyl-CoA to form 3-hydroxy-3-methylglutaryl-CoA (HMG-CoA). Functions in the mevalonate (MVA) pathway leading to isopentenyl diphosphate (IPP), a key precursor for the biosynthesis of isoprenoid compounds that are building blocks of archaeal membrane lipids. This Caldivirga maquilingensis (strain ATCC 700844 / DSM 13496 / JCM 10307 / IC-167) protein is Hydroxymethylglutaryl-CoA synthase.